A 366-amino-acid polypeptide reads, in one-letter code: MSHPYPPPRDKKGSRIGFTTGANAAAAAKAAALALLGEAPEVVDIWLPAGWRQPFRVFRLERKGDGVLVGMIKDAGDDPDVTHGAEIQAFVRFASEDRLEGGEGVGVVTKPGLGVPVGEPAINPVPRRMIWEAVREVTERPLAVTIAIPGGEELAKKTLNPRLGILGGLSVLGTTGVVKPYSTSAFRMSVVQAVGVARANGLLEIAATTGGKSERFAQRLLPHLPEMAFIEMGDFVGDVLRAARKVGVEVVRVVGMIGKISKMADGKTMTHAAGGEVNLSLLLSLLKEAGASPKALKEAEGAATARRFLEIALEEGLELFFVNLVRLAQEKLQAYIGERPFVSVALTDFDEGRCLAAWPDREVYRG.

The protein belongs to the CbiD family.

The catalysed reaction is Co-precorrin-5B + S-adenosyl-L-methionine = Co-precorrin-6A + S-adenosyl-L-homocysteine. It participates in cofactor biosynthesis; adenosylcobalamin biosynthesis; cob(II)yrinate a,c-diamide from sirohydrochlorin (anaerobic route): step 6/10. Functionally, catalyzes the methylation of C-1 in cobalt-precorrin-5B to form cobalt-precorrin-6A. The sequence is that of Cobalt-precorrin-5B C(1)-methyltransferase from Thermus thermophilus (strain ATCC BAA-163 / DSM 7039 / HB27).